We begin with the raw amino-acid sequence, 498 residues long: Glycerol kinase (498 aa).

T12 serves as a coordination point for ADP. T12, T13, and S14 together coordinate ATP. T12 serves as a coordination point for sn-glycerol 3-phosphate. R16 is an ADP binding site. Sn-glycerol 3-phosphate-binding residues include R82, E83, and Y134. The glycerol site is built by R82, E83, and Y134. H230 bears the Phosphohistidine; by HPr mark. D244 is a binding site for sn-glycerol 3-phosphate. Residues D244 and Q245 each contribute to the glycerol site. T266 and G309 together coordinate ADP. The ATP site is built by T266, G309, Q313, and G410. G410 and N414 together coordinate ADP.

It belongs to the FGGY kinase family. As to quaternary structure, homotetramer and homodimer (in equilibrium). The phosphoenolpyruvate-dependent sugar phosphotransferase system (PTS), including enzyme I, and histidine-containing protein (HPr) are required for the phosphorylation, which leads to the activation of the enzyme.

The enzyme catalyses glycerol + ATP = sn-glycerol 3-phosphate + ADP + H(+). Its pathway is polyol metabolism; glycerol degradation via glycerol kinase pathway; sn-glycerol 3-phosphate from glycerol: step 1/1. Its activity is regulated as follows. Activated by phosphorylation and inhibited by fructose 1,6-bisphosphate (FBP). Key enzyme in the regulation of glycerol uptake and metabolism. Catalyzes the phosphorylation of glycerol to yield sn-glycerol 3-phosphate. This chain is Glycerol kinase, found in Staphylococcus aureus (strain MRSA252).